A 225-amino-acid polypeptide reads, in one-letter code: UPF0758 protein swp_2203 (225 aa).

One can recognise an MPN domain in the interval 102 to 224 (ILSDPDLTRD…IVSFAERGWI (123 aa)). Residues H173, H175, and D186 each coordinate Zn(2+). Residues 173 to 186 (HNHPSGIAEPSTAD) carry the JAMM motif motif.

It belongs to the UPF0758 family.

This Shewanella piezotolerans (strain WP3 / JCM 13877) protein is UPF0758 protein swp_2203.